A 116-amino-acid polypeptide reads, in one-letter code: MRHSCRVPKLGKPTDQRRALLRSLATQLIRHGQIKTTKPRAKAVQSEVERMITLAKDGSLAARRRALGYLYDKKLVHSLFNEAQERYGSRNGGYTRVLRTIRRRGDNAEMAIIELI.

The protein belongs to the bacterial ribosomal protein bL17 family. In terms of assembly, part of the 50S ribosomal subunit. Contacts protein L32.

The protein is Large ribosomal subunit protein bL17 of Trichodesmium erythraeum (strain IMS101).